A 66-amino-acid chain; its full sequence is MSKVIRVRYEKGVLKPLEPVNLEDGEEVDIIIRENLAELARRIRRRLSQEREEPSEILSRERSRLA.

It belongs to the UPF0165 family.

Its function is as follows. Possibly the antitoxin component of a type II toxin-antitoxin (TA) system. The chain is Putative antitoxin APE_0279a.1 from Aeropyrum pernix (strain ATCC 700893 / DSM 11879 / JCM 9820 / NBRC 100138 / K1).